Consider the following 1019-residue polypeptide: Collagen alpha-2(VI) chain (1019 aa).

Positions 1–20 (MLQGTCSVLLLWGILGAIQA) are cleaved as a signal peptide. The interval 21–256 (QQQEVISPDT…YKVSCLEIPG (236 aa)) is nonhelical region. One can recognise a VWFA 1 domain in the interval 46-234 (HVYFVLDTSE…EIDQDTINRI (189 aa)). N-linked (GlcNAc...) asparagine glycosylation occurs at Asn-140. Positions 257-588 (PSGPKGYRGQ…GEPGPPGDPG (332 aa)) are disordered. The segment at 257–590 (PSGPKGYRGQ…PGPPGDPGLT (334 aa)) is triple-helical region. A compositionally biased stretch (low complexity) spans 287 to 305 (DPGIEGPIGFPGPKGVPGF). The segment covering 306 to 318 (KGEKGEFGADGRK) has biased composition (basic and acidic residues). Asn-327 carries N-linked (GlcNAc...) asparagine glycosylation. Basic and acidic residues-rich tracts occupy residues 365 to 377 (ERGD…DPGR) and 419 to 429 (PKGEPGRRGDP). Short sequence motifs (cell attachment site) lie at residues 366 to 368 (RGD), 426 to 428 (RGD), 489 to 491 (RGD), 498 to 500 (RGD), and 539 to 541 (RGD). The span at 524 to 557 (PGEKGEPGPRGPEGGRGDFGLKGEPGRKGEKGEP) shows a compositional bias: basic and acidic residues. Residues 559–569 (DPGPPGEPGPR) show a composition bias toward pro residues. The nonhelical region stretch occupies residues 591 to 1019 (ECDVMTYVRE…FFDRFIRWIC (429 aa)). VWFA domains lie at 615-805 (DVVF…EDVL) and 833-1014 (DIVF…FDRF). An N-linked (GlcNAc...) asparagine glycan is attached at Asn-630. Thr-701 is modified (phosphothreonine). A Phosphoserine modification is found at Ser-705. 3 N-linked (GlcNAc...) asparagine glycosylation sites follow: Asn-785, Asn-897, and Asn-954.

This sequence belongs to the type VI collagen family. In terms of assembly, trimers composed of three different chains: alpha-1(VI), alpha-2(VI), and alpha-3(VI) or alpha-5(VI) or alpha-6(VI). Interacts with CSPG4. Prolines at the third position of the tripeptide repeating unit (G-X-Y) are hydroxylated in some or all of the chains.

Its subcellular location is the secreted. It localises to the extracellular space. The protein localises to the extracellular matrix. The protein resides in the membrane. Functionally, collagen VI acts as a cell-binding protein. The chain is Collagen alpha-2(VI) chain (COL6A2) from Homo sapiens (Human).